The chain runs to 291 residues: Inositol-1-monophosphatase (291 aa).

The Mg(2+) site is built by E83, D104, I106, and D107. Position 83 (E83) interacts with substrate. Residues 106–109 (IDGT), R206, and D235 contribute to the substrate site. Position 235 (D235) interacts with Mg(2+).

Belongs to the inositol monophosphatase superfamily. Requires Mg(2+) as cofactor.

It carries out the reaction a myo-inositol phosphate + H2O = myo-inositol + phosphate. In Mycobacterium leprae (strain TN), this protein is Inositol-1-monophosphatase (suhB).